A 193-amino-acid polypeptide reads, in one-letter code: Acyl carrier protein phosphodiesterase (193 aa).

It belongs to the AcpH family.

It catalyses the reaction holo-[ACP] + H2O = apo-[ACP] + (R)-4'-phosphopantetheine + H(+). Its function is as follows. Converts holo-ACP to apo-ACP by hydrolytic cleavage of the phosphopantetheine prosthetic group from ACP. The sequence is that of Acyl carrier protein phosphodiesterase from Klebsiella pneumoniae (strain 342).